A 547-amino-acid polypeptide reads, in one-letter code: MKNTFILGIEGTAWNLSAAIVTETEIIAEVTETYKPEVGGIHPREAAQHHAKYAASVIKRLLAEAKEKGVEPSDLDGIAFSQGPGLGPCLRTIATAARMLSLSLDIPLIGVNHCIAHIEIGIWRTPARDPVVLYVSGANSQVISFMEGRYRVFGETLDIGLGNALDKFARRAGLPHPGGPKIEACAKDAKRYIPLPYVIKGMDLSFSGLSTASSEALKKASLEDVCYSYQETAFAMVVEVAERALAHTGKNEVLLAGGVGANTRLREMLNEMCEARGAKFYVPEKRFMGDNGTMIAYTGLLMYKSGNTLTLEDSRVNPNFRTDDVNVTWIKEEEMKKVPEISPEAFLRAPPGERLDNGAEAVIYLDEGPEGKKVLVKERVPKLYRHKEIDERIRRERNRTEARLISEARRAGVPTPIIYDIEEFKLKMQFIEGVPIKYLITPELSEKVGELVGRLHSSGIVHGDLTTSNLLLAGERLYLIDFGLAYFDKSLEARGVDVHVLFQTFESTHRGHETLVKAFEKGYGSTFIDSKDVLKRVEEIKKRARYA.

The kae1 stretch occupies residues 1-329; that stretch reads MKNTFILGIE…FRTDDVNVTW (329 aa). Residues His113, His117, and Tyr134 each contribute to the Fe cation site. L-threonylcarbamoyladenylate is bound by residues 134-138, Asp166, Gly179, Glu183, and Asn262; that span reads YVSGA. Asp290 is a Fe cation binding site. Residues 340 to 547 form the Protein kinase domain; that stretch reads EISPEAFLRA…EEIKKRARYA (208 aa). ATP is bound by residues 355–363 and Lys377; that span reads LDNGAEAVI. Asp464 serves as the catalytic Proton acceptor; for kinase activity.

In the N-terminal section; belongs to the KAE1 / TsaD family. The protein in the C-terminal section; belongs to the protein kinase superfamily. Tyr protein kinase family. BUD32 subfamily. As to quaternary structure, component of the KEOPS complex that consists of Kae1, Bud32, Cgi121 and Pcc1; the whole complex dimerizes. Fe(2+) serves as cofactor.

Its subcellular location is the cytoplasm. It catalyses the reaction L-seryl-[protein] + ATP = O-phospho-L-seryl-[protein] + ADP + H(+). The catalysed reaction is L-threonyl-[protein] + ATP = O-phospho-L-threonyl-[protein] + ADP + H(+). The enzyme catalyses L-threonylcarbamoyladenylate + adenosine(37) in tRNA = N(6)-L-threonylcarbamoyladenosine(37) in tRNA + AMP + H(+). Functionally, required for the formation of a threonylcarbamoyl group on adenosine at position 37 (t(6)A37) in tRNAs that read codons beginning with adenine. Is a component of the KEOPS complex that is probably involved in the transfer of the threonylcarbamoyl moiety of threonylcarbamoyl-AMP (TC-AMP) to the N6 group of A37. The Kae1 domain likely plays a direct catalytic role in this reaction. The Bud32 domain probably displays kinase activity that regulates Kae1 function. In Methanosarcina acetivorans (strain ATCC 35395 / DSM 2834 / JCM 12185 / C2A), this protein is Probable bifunctional tRNA threonylcarbamoyladenosine biosynthesis protein.